We begin with the raw amino-acid sequence, 100 residues long: Urease subunit gamma (100 aa).

This sequence belongs to the urease gamma subunit family. As to quaternary structure, heterotrimer of UreA (gamma), UreB (beta) and UreC (alpha) subunits. Three heterotrimers associate to form the active enzyme.

The protein localises to the cytoplasm. The catalysed reaction is urea + 2 H2O + H(+) = hydrogencarbonate + 2 NH4(+). The protein operates within nitrogen metabolism; urea degradation; CO(2) and NH(3) from urea (urease route): step 1/1. The polypeptide is Urease subunit gamma (Granulibacter bethesdensis (strain ATCC BAA-1260 / CGDNIH1)).